Reading from the N-terminus, the 291-residue chain is Taste receptor type 2 member 16 (291 aa).

Residue Met-1 is a topological domain, extracellular. A helical transmembrane segment spans residues 2–22 (IPIQLTVFFMIIYVLESLTII). Residues 23–41 (VQSSLIVAVLGREWLQVRR) are Cytoplasmic-facing. The helical transmembrane segment at 42–62 (LMPVDMILISLGISRFCLQWA) threads the bilayer. The Extracellular portion of the chain corresponds to 63 to 84 (SMLNNFCSYFNLNYVLCNLTIT). Residue Asn-80 is glycosylated (N-linked (GlcNAc...) asparagine). A helical membrane pass occupies residues 85–105 (WEFFNILTFWLNSLLTVFYCI). Topologically, residues 106–125 (KVSSFTHHIFLWLRWRILRL) are cytoplasmic. A helical membrane pass occupies residues 126–146 (FPWILLGSLMITCVTIIPSAI). Residues 147-182 (GNYIQIQLLTMEHLPRNSTVTDKLEKFHQYQFQAHT) are Extracellular-facing. Asn-163 carries N-linked (GlcNAc...) asparagine glycosylation. A helical transmembrane segment spans residues 183–203 (VALVIPFILFLASTILLMASL). Residues 204-228 (TKQIQHHSTGHCNPSMKAHFTALRS) lie on the Cytoplasmic side of the membrane. The chain crosses the membrane as a helical span at residues 229 to 249 (LAVLFIVFTSYFLTILITIIG). Topologically, residues 250–257 (TLFDKRCW) are extracellular. The helical transmembrane segment at 258–278 (LWVWEAFVYAFILMHSTSLML) threads the bilayer. The Cytoplasmic segment spans residues 279–291 (SSPTLKRILKGKC).

Belongs to the G-protein coupled receptor T2R family. As to quaternary structure, interacts with RTP3 and RTP4.

It is found in the cell membrane. Functionally, receptor that may play a role in the perception of bitterness and is gustducin-linked. May play a role in sensing the chemical composition of the gastrointestinal content. The activity of this receptor may stimulate alpha gustducin, mediate PLC-beta-2 activation and lead to the gating of TRPM5. The protein is Taste receptor type 2 member 16 (TAS2R16) of Pan troglodytes (Chimpanzee).